We begin with the raw amino-acid sequence, 323 residues long: Methionyl-tRNA formyltransferase (323 aa).

117–120 (SLLP) lines the (6S)-5,6,7,8-tetrahydrofolate pocket.

Belongs to the Fmt family.

It carries out the reaction L-methionyl-tRNA(fMet) + (6R)-10-formyltetrahydrofolate = N-formyl-L-methionyl-tRNA(fMet) + (6S)-5,6,7,8-tetrahydrofolate + H(+). Attaches a formyl group to the free amino group of methionyl-tRNA(fMet). The formyl group appears to play a dual role in the initiator identity of N-formylmethionyl-tRNA by promoting its recognition by IF2 and preventing the misappropriation of this tRNA by the elongation apparatus. The protein is Methionyl-tRNA formyltransferase of Acidovorax ebreus (strain TPSY) (Diaphorobacter sp. (strain TPSY)).